The primary structure comprises 233 residues: Probable tetraheme cytochrome c-type (233 aa).

The N-terminal stretch at 1 to 28 is a signal peptide; sequence MTRLQKGSIGTLLTGALLGIVLVAVVFG. Heme is bound by residues cysteine 39, cysteine 42, methionine 45, cysteine 67, cysteine 70, histidine 71, glutamate 93, cysteine 131, cysteine 134, histidine 135, cysteine 159, cysteine 162, histidine 163, and histidine 168. The interval 182-233 is disordered; that stretch reads QGKLVLKPEDDGDDEEADEDEDEETEEADDSSDSESASSSDNSDNEDDNNDE. Composition is skewed to acidic residues over residues 191–214 and 224–233; these read DDGD…DSSD and SDNEDDNNDE.

It belongs to the NapC/NirT/NrfH family. Binds 4 heme groups per subunit.

Its subcellular location is the periplasm. In Nitrosomonas europaea (strain ATCC 19718 / CIP 103999 / KCTC 2705 / NBRC 14298), this protein is Probable tetraheme cytochrome c-type (cycX1).